The chain runs to 378 residues: Dihydroorotate dehydrogenase (quinone) (378 aa).

FMN is bound by residues 77-81 and Thr101; that span reads AGFDK. Lys81 contacts substrate. 126–130 is a substrate binding site; the sequence is NRMGF. FMN is bound by residues Asn158 and Asn191. Asn191 serves as a coordination point for substrate. Residue Ser194 is the Nucleophile of the active site. Asn196 provides a ligand contact to substrate. Positions 229 and 257 each coordinate FMN. Position 258 to 259 (258 to 259) interacts with substrate; that stretch reads NT. Residues Gly287, Gly316, and 337 to 338 each bind FMN; that span reads YT.

It belongs to the dihydroorotate dehydrogenase family. Type 2 subfamily. Monomer. FMN serves as cofactor.

It localises to the cell membrane. The enzyme catalyses (S)-dihydroorotate + a quinone = orotate + a quinol. It functions in the pathway pyrimidine metabolism; UMP biosynthesis via de novo pathway; orotate from (S)-dihydroorotate (quinone route): step 1/1. Its function is as follows. Catalyzes the conversion of dihydroorotate to orotate with quinone as electron acceptor. This Synechococcus sp. (strain ATCC 27144 / PCC 6301 / SAUG 1402/1) (Anacystis nidulans) protein is Dihydroorotate dehydrogenase (quinone).